We begin with the raw amino-acid sequence, 255 residues long: 5-oxoprolinase subunit A (255 aa).

Belongs to the LamB/PxpA family. In terms of assembly, forms a complex composed of PxpA, PxpB and PxpC.

The catalysed reaction is 5-oxo-L-proline + ATP + 2 H2O = L-glutamate + ADP + phosphate + H(+). Catalyzes the cleavage of 5-oxoproline to form L-glutamate coupled to the hydrolysis of ATP to ADP and inorganic phosphate. This is 5-oxoprolinase subunit A from Nitrobacter winogradskyi (strain ATCC 25391 / DSM 10237 / CIP 104748 / NCIMB 11846 / Nb-255).